Consider the following 533-residue polypeptide: Adenosine deaminase (533 aa).

Positions 1–19 (MKILLAVVFVLNLTNLAVP) are cleaved as a signal peptide.

The protein belongs to the metallo-dependent hydrolases superfamily. Adenosine and AMP deaminases family. ADGF subfamily. The cofactor is Zn(2+). Proteolytically cleaved by human mast cell tryptase and chymase. As to expression, female salivary gland (at protein level).

The protein localises to the secreted. The catalysed reaction is adenosine + H2O + H(+) = inosine + NH4(+). It carries out the reaction 2'-deoxyadenosine + H2O + H(+) = 2'-deoxyinosine + NH4(+). In terms of biological role, catalyzes the deamination of adenosine to inosine and deoxyadenosine to deoxyinosine. Induces degranulation of host mast cells, and secretion of tryptase and IL6. Modulates enzymatic activities of human tryptase and chymase. Induces release of cytokines, such as IL1B, IL6, TNF, CCL2, IFN-beta (INFB1) and ISG15, from host monocytes and macrophages. Activates host NF-kappa-B signaling pathway in TAK1/MAP3K7-dependent manner. Its function is as follows. (Microbial infection) Promotes replication of dengue virus type 2 in host cells probably via modulation of cytokine production in host macrophages and monocytes. The protein is Adenosine deaminase of Aedes albopictus (Asian tiger mosquito).